Reading from the N-terminus, the 121-residue chain is Apoptin (121 aa).

Disordered regions lie at residues 1–28 (MNAH…LETP) and 57–95 (LRSA…PSEY). The span at 58–70 (RSATADNSENTGF) shows a compositional bias: polar residues.

The protein belongs to the gyrovirus apoptin family.

It is found in the host nucleus. Functionally, may act as transcriptional regulator. Induces apoptosis in infected cells. Element of infectious replication cycle. The protein is Apoptin (VP3) of Gallus gallus (Chicken).